The chain runs to 959 residues: Bifunctional premutilin synthase (959 aa).

The interval 1 to 542 is class II diterpene cyclase; the sequence is MGLSEDLHAR…ALNVPIPRFD (542 aa). The DXDD motif signature appears at 309-312; it reads DADM. Aspartate 311 functions as the For class II diterpene cyclase activity in the catalytic mechanism. The interval 543 to 959 is class I diterpene synthase; it reads PASITTLPPI…TANGSNGIHH (417 aa). The active-site For class I diterpene synthase activity is aspartate 649. 3 residues coordinate Mg(2+): aspartate 649, aspartate 653, and asparagine 824. The short motif at 649 to 653 is the DDXXD motif element; sequence DDYLD. The segment at 931–959 is disordered; sequence KGANGVKKTNGLTTNGTKATANGSNGIHH. Positions 934–959 are enriched in low complexity; that stretch reads NGVKKTNGLTTNGTKATANGSNGIHH.

The protein belongs to the terpene synthase family. Requires Mg(2+) as cofactor.

It functions in the pathway secondary metabolite biosynthesis; terpenoid biosynthesis. Its function is as follows. Bifunctional premutilin synthase; part of the gene cluster that mediates the biosynthesis of pleuromutilin, a tricyclic diterpene showing antibacterial properties. The geranylgeranyl diphosphate (GGPP) synthase ple4 catalyzes the first step in pleuromutilin biosynthesis. GGPP is then substrate of the premutilin synthase (PS) ple3 to yield premutilin. Premutilin synthase is a bifunctional enzyme composed of the fusion of a class II diterpene cyclase (DTC) and a class I diterpene synthase (DTS), with the corresponding domains and active sites containing characteristic aspartate-rich motifs. GGPP is first converted to mutildienyl-diphosphate (MPP) at the class II DTC site. MPP is subsequently further cyclized at the class I DTS site, followed by a 1,5-hydride shift and addition of water prior to terminating deprotonation, to yield premutilin. The cytochrome P450 monooxygenases ple5 and ple6 hydroxylate premutilin at C-11 and C-3, respectively, producing 11-hydroxypremutilin and 3-hydroxypremutilin. The combination of the actions of both ple5 and ple6 leads to the production of 3,11-dihydroxypremutilin. The short chain dehydrogenase ple7 further converts 3,11-dihydroxypremutilin into mutilin. The acetyltransferase ple2 then acetylates mutilin to produce 14-O-acetylmutilin. Finally, the cytochrome P450 monooxygenase ple1 catalyzes hydroxylation on the alpha position of the acetyl side chain of 14-O-acetylmutilin to yield pleuromutilin. This chain is Bifunctional premutilin synthase, found in Rhodocybe pseudopiperita (Clitopilus pseudopiperitus).